A 399-amino-acid chain; its full sequence is Beta sliding clamp (399 aa).

This sequence belongs to the beta sliding clamp family. Forms a ring-shaped head-to-tail homodimer around DNA which binds and tethers DNA polymerases and other proteins to the DNA. The DNA replisome complex has a single clamp-loading complex (3 tau and 1 each of delta, delta', psi and chi subunits) which binds 3 Pol III cores (1 core on the leading strand and 2 on the lagging strand) each with a beta sliding clamp dimer. Additional proteins in the replisome are other copies of gamma, psi and chi, Ssb, DNA helicase and RNA primase.

The protein resides in the cytoplasm. Its function is as follows. Confers DNA tethering and processivity to DNA polymerases and other proteins. Acts as a clamp, forming a ring around DNA (a reaction catalyzed by the clamp-loading complex) which diffuses in an ATP-independent manner freely and bidirectionally along dsDNA. Initially characterized for its ability to contact the catalytic subunit of DNA polymerase III (Pol III), a complex, multichain enzyme responsible for most of the replicative synthesis in bacteria; Pol III exhibits 3'-5' exonuclease proofreading activity. The beta chain is required for initiation of replication as well as for processivity of DNA replication. In Mycolicibacterium paratuberculosis (strain ATCC BAA-968 / K-10) (Mycobacterium paratuberculosis), this protein is Beta sliding clamp (dnaN).